A 306-amino-acid chain; its full sequence is Protein farnesyltransferase/geranylgeranyltransferase type-1 subunit alpha (306 aa).

5 PFTA repeats span residues 48–82, 84–118, 125–159, 161–195, and 201–235; these read YSERALHITELGINELASHYTIWIYRFNILKNLPN, NLYDELDWCEEIALDNEKNYQIWNYRQLIIGQIME, DPYREFPILEAMLSSDPKNHHVWSYRKWLVDTFDL, NDAKELSFVDKVIDTDLKNNSAWSHRFFLLFSKKH, and TIDEELNYVKDKIVKCPQNPSTWNYLLGIHERFDR.

Belongs to the protein prenyltransferase subunit alpha family. Heterodimer of an alpha and a beta subunit. Mg(2+) is required as a cofactor.

The catalysed reaction is L-cysteinyl-[protein] + (2E,6E)-farnesyl diphosphate = S-(2E,6E)-farnesyl-L-cysteinyl-[protein] + diphosphate. It carries out the reaction geranylgeranyl diphosphate + L-cysteinyl-[protein] = S-geranylgeranyl-L-cysteinyl-[protein] + diphosphate. In terms of biological role, essential subunit of both the farnesyltransferase and the geranylgeranyltransferase complex. Contributes to the transfer of a farnesyl or geranylgeranyl moiety from farnesyl or geranylgeranyl diphosphate to a cysteine at the fourth position from the C-terminus of several proteins having the C-terminal sequence Cys-aliphatic-aliphatic-X. The chain is Protein farnesyltransferase/geranylgeranyltransferase type-1 subunit alpha (RAM2) from Candida albicans (Yeast).